Here is a 178-residue protein sequence, read N- to C-terminus: Nicotinamide-nucleotide adenylyltransferase (178 aa).

The protein belongs to the archaeal NMN adenylyltransferase family.

The protein localises to the cytoplasm. The enzyme catalyses beta-nicotinamide D-ribonucleotide + ATP + H(+) = diphosphate + NAD(+). It functions in the pathway cofactor biosynthesis; NAD(+) biosynthesis; NAD(+) from nicotinamide D-ribonucleotide: step 1/1. This is Nicotinamide-nucleotide adenylyltransferase from Pyrobaculum aerophilum (strain ATCC 51768 / DSM 7523 / JCM 9630 / CIP 104966 / NBRC 100827 / IM2).